A 367-amino-acid chain; its full sequence is PR domain zinc finger protein 12 (367 aa).

An SET domain is found at 86–203 (AEVIIAQSSI…PDQELLVWYG (118 aa)). C2H2-type zinc fingers lie at residues 243–265 (MRCV…MRIH), 271–293 (FVCR…VRLH), and 299–323 (YKCQ…SARH). A disordered region spans residues 318–337 (QKSARHRPPSTALQAHSPAL).

This sequence belongs to the class V-like SAM-binding methyltransferase superfamily. Interacts with EHMT2. As to expression, not found in adult tissues except in dorsal root ganglia.

The protein resides in the nucleus. Transcriptional regulator necessary for the development of nociceptive neurons, playing a key role in determining the nociceptive lineage from neural crest cell progenitors. Initiates neurogenesis and activates downstream pro-neuronal transcription factors, such as NEUROD1, BRN3A, and ISL1, specifically within nociceptive neurons, while repressing non-nociceptor cell fates. Essential for the proper function of nociceptors in adults, influencing both their excitability and their gene expression, thereby impacting how these neurons respond to various pain stimuli. This chain is PR domain zinc finger protein 12 (PRDM12), found in Homo sapiens (Human).